Here is a 150-residue protein sequence, read N- to C-terminus: Actin-depolymerizing factor 3 (150 aa).

One can recognise an ADF-H domain in the interval 7–150; sequence GVAVSEECKA…TLDVLKDHTS (144 aa).

It belongs to the actin-binding proteins ADF family.

Functionally, actin-depolymerizing protein. Severs actin filaments (F-actin) and binds to actin monomers. In Oryza sativa subsp. japonica (Rice), this protein is Actin-depolymerizing factor 3 (ADF3).